A 216-amino-acid chain; its full sequence is MLDREGFRPNVGIILLNAHNEVFWGKRLREHSWQFPQGGIKYGETPMQAMYRELHEETGLLPEHVKIIGRTRDWLRYEVPDKFIKREVRGHYRGQKQIWFLLRMVGRDCDICLRATDHPEFDAWRWNEYWVPLDAVIEFKRDVYQLALTELSRFLRRPAQRTDKSRGPRAPRYPRVANGHAASETPAAIDTSAVCSEVEPGANALDETPPRVSLRD.

Residues 6–149 (GFRPNVGIIL…KRDVYQLALT (144 aa)) form the Nudix hydrolase domain. Residues 38-59 (GGIKYGETPMQAMYRELHEETG) carry the Nudix box motif. The segment at 159–191 (AQRTDKSRGPRAPRYPRVANGHAASETPAAIDT) is disordered.

The protein belongs to the Nudix hydrolase family. RppH subfamily. It depends on a divalent metal cation as a cofactor.

Functionally, accelerates the degradation of transcripts by removing pyrophosphate from the 5'-end of triphosphorylated RNA, leading to a more labile monophosphorylated state that can stimulate subsequent ribonuclease cleavage. The protein is RNA pyrophosphohydrolase of Burkholderia pseudomallei (strain 668).